A 429-amino-acid chain; its full sequence is Enolase (429 aa).

(2R)-2-phosphoglycerate is bound at residue Q163. E205 serves as the catalytic Proton donor. The Mg(2+) site is built by D242, E287, and D314. 4 residues coordinate (2R)-2-phosphoglycerate: K339, R368, S369, and K390. K339 functions as the Proton acceptor in the catalytic mechanism.

This sequence belongs to the enolase family. Mg(2+) serves as cofactor.

It is found in the cytoplasm. The protein resides in the secreted. Its subcellular location is the cell surface. The catalysed reaction is (2R)-2-phosphoglycerate = phosphoenolpyruvate + H2O. The protein operates within carbohydrate degradation; glycolysis; pyruvate from D-glyceraldehyde 3-phosphate: step 4/5. Functionally, catalyzes the reversible conversion of 2-phosphoglycerate (2-PG) into phosphoenolpyruvate (PEP). It is essential for the degradation of carbohydrates via glycolysis. This Salinibacter ruber (strain DSM 13855 / M31) protein is Enolase.